Here is a 398-residue protein sequence, read N- to C-terminus: MAGYEYVSPEQLSGFDKYKYSALDTNPLSLYIMHPFWNTIVKVFPTWLAPNLITFSGFMLLVFNFLLLTYFDPDFYASAPGHKHVPDWVWIVVGILNFAAYTLDGVDGKQARRTNSSTPLGELFDHGLDSWSCVYFVVTVYSIFGRGPTGVSVFVLYLLLWVVLFSFILSHWEKYNTGVLFLPWGYDISQVTISFVYIVTAVVGVEAWYEPFLFNFLYRDLFTAMIIGCALCVTLPMSLLNFFRSYKSNTLKHKSVYEAMVPFFSPCLLFTLCTVWILWSPSDILEIHPRIFYFMVGTAFANITCQLIVCQMSSTRCPTLNWLLLPLLLVVAAVIVGAATSRLESALLYTLTAAFTLAHIHYGVQVVKQLSRHFQIYPFSLRKPNSDULGMEEQNIGL.

Ala-2 is subject to N-acetylalanine. A run of 10 helical transmembrane segments spans residues 47 to 69, 84 to 103, 123 to 145, 150 to 172, 179 to 201, 221 to 243, 256 to 278, 291 to 310, 319 to 341, and 345 to 367; these read WLAPNLITFSGFMLLVFNFLLLT, HVPDWVWIVVGILNFAAYTL, LFDHGLDSWSCVYFVVTVYSIFG, GVSVFVLYLLLWVVLFSFILSHW, VLFLPWGYDISQVTISFVYIVTA, LFTAMIIGCALCVTLPMSLLNFF, VYEAMVPFFSPCLLFTLCTVWIL, IFYFMVGTAFANITCQLIVC, TLNWLLLPLLLVVAAVIVGAATS, and SALLYTLTAAFTLAHIHYGVQVV. Position 388 (Sec-388) is a non-standard amino acid, selenocysteine.

This sequence belongs to the CDP-alcohol phosphatidyltransferase class-I family. Requires Mg(2+) as cofactor. Mn(2+) is required as a cofactor.

The protein resides in the endoplasmic reticulum membrane. It catalyses the reaction CDP-ethanolamine + a 1,2-diacyl-sn-glycerol = a 1,2-diacyl-sn-glycero-3-phosphoethanolamine + CMP + H(+). It carries out the reaction 1-O-alkyl-2-acyl-sn-glycerol + CDP-ethanolamine = a 1-O-alkyl-2-acyl-sn-glycero-3-phosphoethanolamine + CMP + H(+). It participates in phospholipid metabolism; phosphatidylethanolamine biosynthesis; phosphatidylethanolamine from ethanolamine: step 3/3. Ethanolaminephosphotransferase that catalyzes the transfer of phosphoethanolamine (PE) from CDP-ethanolamine to lipid acceptors, the final step in the synthesis of PE via the 'Kennedy' pathway. PE is the second most abundant phospholipid of membranes in mammals and is involved in various membrane-related cellular processes. The enzyme is critical for the synthesis of several PE species and also catalyzes the synthesis of plasmanyl-PE, a lipid required for proper myelination and neurodevelopment, from 1-alkyl-2-acylglycerol. The protein is Ethanolaminephosphotransferase 1 of Mus musculus (Mouse).